The primary structure comprises 113 residues: Iron-sulfur cluster insertion protein ErpA (113 aa).

Positions 41, 105, and 107 each coordinate iron-sulfur cluster.

This sequence belongs to the HesB/IscA family. As to quaternary structure, homodimer. It depends on iron-sulfur cluster as a cofactor.

Functionally, required for insertion of 4Fe-4S clusters for at least IspG. This chain is Iron-sulfur cluster insertion protein ErpA, found in Histophilus somni (strain 129Pt) (Haemophilus somnus).